A 193-amino-acid polypeptide reads, in one-letter code: 5'RNA triphosphatase A449R (193 aa).

Mn(2+) is required as a cofactor.

It catalyses the reaction a 5'-end triphospho-ribonucleoside in mRNA + H2O = a 5'-end diphospho-ribonucleoside in mRNA + phosphate + H(+). Catalyzes the first stes of cap formation: by removing the gamma-phosphate from the 5'-triphosphate end of nascent mRNA to yield a diphosphate end. This chain is 5'RNA triphosphatase A449R (A449R), found in Chlorella (PBCV-1).